A 446-amino-acid chain; its full sequence is Ribosomal protein uS12 methylthiotransferase RimO (446 aa).

The MTTase N-terminal domain occupies 4-119 (LKVGLISLGC…LVENINNFIS (116 aa)). Residues C13, C48, C82, C157, C161, and C164 each contribute to the [4Fe-4S] cluster site. The 231-residue stretch at 143-373 (TTKSHTAYLR…MMLQKHIIYS (231 aa)) folds into the Radical SAM core domain. The TRAM domain maps to 376–442 (KYKIGNKYKV…EYDLVGVVYD (67 aa)).

Belongs to the methylthiotransferase family. RimO subfamily. [4Fe-4S] cluster serves as cofactor.

The protein resides in the cytoplasm. The catalysed reaction is L-aspartate(89)-[ribosomal protein uS12]-hydrogen + (sulfur carrier)-SH + AH2 + 2 S-adenosyl-L-methionine = 3-methylsulfanyl-L-aspartate(89)-[ribosomal protein uS12]-hydrogen + (sulfur carrier)-H + 5'-deoxyadenosine + L-methionine + A + S-adenosyl-L-homocysteine + 2 H(+). Its function is as follows. Catalyzes the methylthiolation of an aspartic acid residue of ribosomal protein uS12. The chain is Ribosomal protein uS12 methylthiotransferase RimO from Clostridium kluyveri (strain ATCC 8527 / DSM 555 / NBRC 12016 / NCIMB 10680 / K1).